We begin with the raw amino-acid sequence, 148 residues long: 3-dehydroquinate dehydratase (148 aa).

The active-site Proton acceptor is Tyr24. Substrate contacts are provided by Asn75, His81, and Asp88. His101 acts as the Proton donor in catalysis. Substrate contacts are provided by residues 102–103 (LS) and Arg112.

The protein belongs to the type-II 3-dehydroquinase family. As to quaternary structure, homododecamer.

The catalysed reaction is 3-dehydroquinate = 3-dehydroshikimate + H2O. It participates in metabolic intermediate biosynthesis; chorismate biosynthesis; chorismate from D-erythrose 4-phosphate and phosphoenolpyruvate: step 3/7. Functionally, catalyzes a trans-dehydration via an enolate intermediate. The sequence is that of 3-dehydroquinate dehydratase from Bartonella henselae (strain ATCC 49882 / DSM 28221 / CCUG 30454 / Houston 1) (Rochalimaea henselae).